Reading from the N-terminus, the 313-residue chain is ADP-L-glycero-D-manno-heptose-6-epimerase (313 aa).

NADP(+) contacts are provided by residues 10–11, 31–32, Arg38, Lys53, 75–79, and Asn92; these read FI, DD, and EGACS. The Proton acceptor role is filled by Tyr139. Lys143 serves as a coordination point for NADP(+). Asn168 is a substrate binding site. 2 residues coordinate NADP(+): Val169 and Lys177. The Proton acceptor role is filled by Lys177. Substrate contacts are provided by residues Lys179, His186, 200-203, Arg213, and Tyr277; that span reads FEGW.

It belongs to the NAD(P)-dependent epimerase/dehydratase family. HldD subfamily. As to quaternary structure, homopentamer. NADP(+) is required as a cofactor.

It catalyses the reaction ADP-D-glycero-beta-D-manno-heptose = ADP-L-glycero-beta-D-manno-heptose. It participates in nucleotide-sugar biosynthesis; ADP-L-glycero-beta-D-manno-heptose biosynthesis; ADP-L-glycero-beta-D-manno-heptose from D-glycero-beta-D-manno-heptose 7-phosphate: step 4/4. Catalyzes the interconversion between ADP-D-glycero-beta-D-manno-heptose and ADP-L-glycero-beta-D-manno-heptose via an epimerization at carbon 6 of the heptose. This is ADP-L-glycero-D-manno-heptose-6-epimerase from Marinobacter nauticus (strain ATCC 700491 / DSM 11845 / VT8) (Marinobacter aquaeolei).